The primary structure comprises 279 residues: Biotin synthase (279 aa).

A Radical SAM core domain is found at 2 to 228 (KTIMLCAISS…NARIMIAGGR (227 aa)). The [4Fe-4S] cluster site is built by Cys-17, Cys-21, and Cys-24. [2Fe-2S] cluster is bound by residues Cys-61, Cys-96, Cys-154, and Arg-221.

Belongs to the radical SAM superfamily. Biotin synthase family. Homodimer. It depends on [4Fe-4S] cluster as a cofactor. [2Fe-2S] cluster is required as a cofactor.

The catalysed reaction is (4R,5S)-dethiobiotin + (sulfur carrier)-SH + 2 reduced [2Fe-2S]-[ferredoxin] + 2 S-adenosyl-L-methionine = (sulfur carrier)-H + biotin + 2 5'-deoxyadenosine + 2 L-methionine + 2 oxidized [2Fe-2S]-[ferredoxin]. It functions in the pathway cofactor biosynthesis; biotin biosynthesis; biotin from 7,8-diaminononanoate: step 2/2. Catalyzes the conversion of dethiobiotin (DTB) to biotin by the insertion of a sulfur atom into dethiobiotin via a radical-based mechanism. The protein is Biotin synthase of Campylobacter curvus (strain 525.92).